The following is a 733-amino-acid chain: Protein psiM (733 aa).

The first 26 residues, 1–26 (MKKINNNKIFVLFLTILLYLLNITTA), serve as a signal peptide directing secretion. Asn22, Asn65, and Asn96 each carry an N-linked (GlcNAc...) asparagine glycan. At 27-672 (QKPVSINIKI…VCQKAALVST (646 aa)) the chain is on the extracellular side. One can recognise a PA14 domain in the interval 114–260 (NYDSDSGNYI…YDYCGVCNGD (147 aa)). N-linked (GlcNAc...) asparagine glycosylation is found at Asn277, Asn336, Asn379, Asn428, Asn471, Asn537, Asn573, and Asn641. Residues 673-693 (AVIASVVVVGAVVLGAAIFAG) form a helical membrane-spanning segment. The Cytoplasmic portion of the chain corresponds to 694-733 (KKGYDAWKTSQGNVMAASQANPLYTQSSNGGENPLYNSPT).

It belongs to the prespore-cell-inducing factor family.

The protein resides in the membrane. The chain is Protein psiM (psiM) from Dictyostelium discoideum (Social amoeba).